The following is a 179-amino-acid chain: Inosine/xanthosine triphosphatase (179 aa).

Mg(2+) is bound at residue Glu71. Glu71–Ala72 is a substrate binding site.

The protein belongs to the YjjX NTPase family. In terms of assembly, homodimer. The cofactor is Mg(2+). Mn(2+) is required as a cofactor.

The enzyme catalyses XTP + H2O = XDP + phosphate + H(+). It carries out the reaction ITP + H2O = IDP + phosphate + H(+). Functionally, phosphatase that hydrolyzes non-canonical purine nucleotides such as XTP and ITP to their respective diphosphate derivatives. Probably excludes non-canonical purines from DNA/RNA precursor pool, thus preventing their incorporation into DNA/RNA and avoiding chromosomal lesions. The polypeptide is Inosine/xanthosine triphosphatase (Shewanella sp. (strain MR-4)).